A 205-amino-acid polypeptide reads, in one-letter code: Molybdenum cofactor guanylyltransferase (205 aa).

GTP-binding positions include 14 to 16 (LAG), lysine 27, aspartate 77, and aspartate 107. Aspartate 107 contacts Mg(2+).

It belongs to the MobA family. Monomer. Requires Mg(2+) as cofactor.

It is found in the cytoplasm. The enzyme catalyses Mo-molybdopterin + GTP + H(+) = Mo-molybdopterin guanine dinucleotide + diphosphate. Transfers a GMP moiety from GTP to Mo-molybdopterin (Mo-MPT) cofactor (Moco or molybdenum cofactor) to form Mo-molybdopterin guanine dinucleotide (Mo-MGD) cofactor. In Burkholderia cenocepacia (strain HI2424), this protein is Molybdenum cofactor guanylyltransferase.